The primary structure comprises 83 residues: UPF0248 protein PH1212.1 (83 aa).

Belongs to the UPF0248 family.

This is UPF0248 protein PH1212.1 from Pyrococcus horikoshii (strain ATCC 700860 / DSM 12428 / JCM 9974 / NBRC 100139 / OT-3).